Reading from the N-terminus, the 360-residue chain is Protein MGF 360-2L (360 aa).

Belongs to the asfivirus MGF 360 family.

Its function is as follows. Plays a role in virus cell tropism, and may be required for efficient virus replication in macrophages. The sequence is that of Protein MGF 360-2L from Ornithodoros (relapsing fever ticks).